The sequence spans 240 residues: Putative glycyl-radical enzyme activating enzyme MJ1227 (240 aa).

The Radical SAM core domain maps to 14 to 232; it reads IDYPKKASAV…KKYIDNVVIR (219 aa). [4Fe-4S] cluster-binding residues include Cys-29, Cys-33, and Cys-36. S-adenosyl-L-methionine contacts are provided by residues 35–37, Gly-71, and 126–128; these read YCH and FDK.

Belongs to the organic radical-activating enzymes family. [4Fe-4S] cluster serves as cofactor.

It carries out the reaction glycyl-[protein] + reduced [flavodoxin] + S-adenosyl-L-methionine = glycin-2-yl radical-[protein] + semiquinone [flavodoxin] + 5'-deoxyadenosine + L-methionine + H(+). The sequence is that of Putative glycyl-radical enzyme activating enzyme MJ1227 from Methanocaldococcus jannaschii (strain ATCC 43067 / DSM 2661 / JAL-1 / JCM 10045 / NBRC 100440) (Methanococcus jannaschii).